A 691-amino-acid chain; its full sequence is Elongation factor G (691 aa).

The region spanning 8–283 is the tr-type G domain; the sequence is EDYRNFGIMA…AVVDYLPSPV (276 aa). GTP-binding positions include 17–24, 81–85, and 135–138; these read AHIDAGKT, DTPGH, and NKMD.

It belongs to the TRAFAC class translation factor GTPase superfamily. Classic translation factor GTPase family. EF-G/EF-2 subfamily.

It localises to the cytoplasm. Catalyzes the GTP-dependent ribosomal translocation step during translation elongation. During this step, the ribosome changes from the pre-translocational (PRE) to the post-translocational (POST) state as the newly formed A-site-bound peptidyl-tRNA and P-site-bound deacylated tRNA move to the P and E sites, respectively. Catalyzes the coordinated movement of the two tRNA molecules, the mRNA and conformational changes in the ribosome. This is Elongation factor G from Methylorubrum populi (strain ATCC BAA-705 / NCIMB 13946 / BJ001) (Methylobacterium populi).